Consider the following 267-residue polypeptide: L-erythrulose-1-phosphate isomerase (267 aa).

Histidine 95 functions as the Electrophile in the catalytic mechanism. Glutamate 168 serves as the catalytic Proton acceptor. Substrate contacts are provided by glycine 174 and serine 211.

The protein belongs to the triosephosphate isomerase family. As to quaternary structure, homodimer.

The protein localises to the cytoplasm. The enzyme catalyses L-erythrulose 1-phosphate = D-erythrulose 4-phosphate. Its pathway is carbohydrate metabolism; erythritol degradation. Its function is as follows. Catalyzes the isomerization of D-erythrulose-4P to L-erythrulose-1P. This is L-erythrulose-1-phosphate isomerase from Rhizobium etli (strain ATCC 51251 / DSM 11541 / JCM 21823 / NBRC 15573 / CFN 42).